The chain runs to 542 residues: Chaperonin GroEL (542 aa).

ATP-binding positions include 29-32 (TLGP), 86-90 (DGTTT), glycine 413, 476-478 (NAA), and aspartate 492.

It belongs to the chaperonin (HSP60) family. Forms a cylinder of 14 subunits composed of two heptameric rings stacked back-to-back. Interacts with the co-chaperonin GroES.

The protein resides in the cytoplasm. It catalyses the reaction ATP + H2O + a folded polypeptide = ADP + phosphate + an unfolded polypeptide.. In terms of biological role, together with its co-chaperonin GroES, plays an essential role in assisting protein folding. The GroEL-GroES system forms a nano-cage that allows encapsulation of the non-native substrate proteins and provides a physical environment optimized to promote and accelerate protein folding. The protein is Chaperonin GroEL of Lactococcus lactis subsp. cremoris (strain SK11).